We begin with the raw amino-acid sequence, 1241 residues long: MSRTSAGFADFFPTAPSVLQQKRVRAPRDRPCPKDRPEDQLHVQDDNGQSSCSPGTSAANVSTNGSPPSVSVSETGTGVENSGCKLVGETNTDITGTDTSILSASLAQCRATQVNEARFDNLTPVTNAESSPPRKLSPHQSKSVEVAEYESNKFATDESKLAATPLHTPPTPRSQTSRSGVIKGCKLVYDPDLEKRSSKEKRRKPQYVDFVVNEQDGCSPDPRLSILNYTRGAGCKQKTKYRPAPYRLKQWPYDTATTIGPGPPVQIVVTGFDPLTPVAPINALFSSFGEISEINNRTDPITGRFLGVCSVKYKDSTSFRGAGPVPAATAARRAYVECKKEQRIGTRRIRVELDRDGAVSDRIVARAIESQRMGHKKNIVGEEAKVEPQAKKNEPPPTAPKGPSRSSTRPVAAVPEGPRASFLKPAIPSLIEETPILAQIKRDPYIFIAHCYVPVLSTTIPHLKKRLKLFDWKDIRCDKTGYYIIFENSRRGEEETERCFKVCHMKPLFTYIMNMESQPYGNPNYERSPSPERLQAERRERAERERLKKEADLDLEEEKKQRAIDLDPCREVLALIVRDLKDKLLEDVKSRIAAPTLYDYLDPDRHAARRRALGIPDPEGIRRHTFRLDADNFGSNNPRSFLPGDRSFSPYGLNILALPRIRKARRLNRANAAFLDERRKQPVRRKEVRPLYHRLQQLHDVDDSDEDQRTPFSRDIDEQDSRPPSRMSSRSSISDDGEESEPLDGLAPQGKRHESRLLGLEYEDSGNTLNEAVDGYSRHDSPGLSSTRKRKRVAEGIDVRKRPKEESERSQLNRSVEAGDTFYEESQHSEAAELGTVKPENLAGIGGKFLGRVEDRSINEDGEKENMERLHIESAIQGANLGIQQPLPDESTTTKSHEDPITEIEWGVSNDEPRPTVVDDETIILDLDGWQNLVKDEEDLCFLRHVLDGQSRSKVGNLSAWAWRQKEIKALNRAGESGPVHQETRIPDYYVCNPTGAARTEGRKRILESEKSKYLPHRIKVQKAREEREANAKSDPHASSAAEAARISAAKTISKSTSRSTRVNNRRLVADINAQKQALPMQGGDGDVLRFNQLKKRKKPVRFARSAIHNWGLYAEENISANDMIIEYVGEKVRQQVADMRERQYLKSGIGSSYLFRIDENTVIDATKRGGIARFINHSCTPNCTAKIIKVDGSKRIVIYALRDIGRDEELTYDYKFEREWDSDDRIPCLCGSTGCKGFLN.

Disordered regions lie at residues Met-1–Cys-84, Asp-120–Ser-179, Lys-376–Pro-415, Tyr-520–Glu-545, Lys-686–Arg-752, Thr-768–Gly-819, and Gln-1022–Asn-1064. Residues Ala-26–Asp-45 are compositionally biased toward basic and acidic residues. Positions Asp-46–Glu-80 are enriched in polar residues. 3 stretches are compositionally biased toward basic and acidic residues: residues Ile-379–Glu-394, Leu-534–Glu-545, and Gln-697–Pro-723. Low complexity predominate over residues Pro-724–Ser-734. 2 stretches are compositionally biased toward basic and acidic residues: residues Val-793–Gln-811 and Lys-1023–Pro-1036. Low complexity predominate over residues Ala-1038–Asn-1064. Residues Arg-1062–Arg-1067 carry the RxxxRR motif motif. One can recognise an SET domain in the interval Lys-1099–Lys-1216. Tyr-1215 is an S-adenosyl-L-methionine binding site. The Post-SET domain maps to Asp-1225 to Asn-1241.

Belongs to the class V-like SAM-binding methyltransferase superfamily. Component of the Set1C/COMPASS complex.

Its subcellular location is the nucleus. It is found in the chromosome. It catalyses the reaction L-lysyl(4)-[histone H3] + 3 S-adenosyl-L-methionine = N(6),N(6),N(6)-trimethyl-L-lysyl(4)-[histone H3] + 3 S-adenosyl-L-homocysteine + 3 H(+). It carries out the reaction N(6)-methyl-L-lysyl(4)-[histone H3] + S-adenosyl-L-methionine = N(6),N(6)-dimethyl-L-lysyl(4)-[histone H3] + S-adenosyl-L-homocysteine + H(+). The catalysed reaction is N(6),N(6)-dimethyl-L-lysyl(4)-[histone H3] + S-adenosyl-L-methionine = N(6),N(6),N(6)-trimethyl-L-lysyl(4)-[histone H3] + S-adenosyl-L-homocysteine + H(+). In terms of biological role, catalytic component of the COMPASS (Set1C) complex that specifically mono-, di- and trimethylates histone H3 to form H3K4me1/2/3. Binds RNAs which might negatively affect its histone methyltransferase activity. COMPASS recognizes ubiquitinated H2B on one face of the nucleosome which stimulates the methylation of H3 on the opposing face. The sequence is that of Histone-lysine N-methyltransferase, H3 lysine-4 specific (set1) from Aspergillus fumigatus (strain ATCC MYA-4609 / CBS 101355 / FGSC A1100 / Af293) (Neosartorya fumigata).